The sequence spans 2593 residues: Citrinin polyketide synthase (2593 aa).

The interval 70–224 (KLLENLNAWI…YVSVIVDQRR (155 aa)) is N-terminal acylcarrier protein transacylase domain (SAT). Cys139 acts as the Nucleophile; for transacylase activity in catalysis. The active-site Proton donor/acceptor; for transacylase activity is the His258. The 416-residue stretch at 391–806 (DERIAVIGMA…GSNASMVVTQ (416 aa)) folds into the Ketosynthase family 3 (KS3) domain. Catalysis depends on for beta-ketoacyl synthase activity residues Cys555, His690, and His729. The segment at 906 to 1191 (PDPKPVILCF…VAIWLEAGSN (286 aa)) is malonyl-CoA:ACP transacylase (MAT) domain. Positions 1291 to 1424 (PKGLTTFVGY…GTITFQAADS (134 aa)) are N-terminal hotdog fold. Positions 1291-1603 (PKGLTTFVGY…YQKVSISGIR (313 aa)) constitute a PKS/mFAS DH domain. The segment at 1322–1601 (LLSGHIMANA…ISYQKVSISG (280 aa)) is product template (PT) domain. His1326 (proton acceptor; for dehydratase activity) is an active-site residue. A C-terminal hotdog fold region spans residues 1451–1603 (VADDILQGRN…YQKVSISGIR (153 aa)). Asp1508 serves as the catalytic Proton donor; for dehydratase activity. The tract at residues 1636 to 1662 (VADSPLVDGSSTAVSGTPPTKKAPKAP) is disordered. The Carrier domain maps to 1661-1738 (APSVDITGKM…SLVECMQRIL (78 aa)). Ser1689 carries the O-(pantetheine 4'-phosphoryl)serine modification. Catalysis depends on for methyltransferase activity residues Tyr1955, His2067, and Glu2093. A methyltransferase (CMeT) domain region spans residues 1960–2134 (INAVWIQQAE…ATHWKKILTS (175 aa)). Positions 2215 to 2459 (PAPTGHCVLV…KALPDFDGSL (245 aa)) are NADPH-binding (R) domain.

The cofactor is pantetheine 4'-phosphate.

Its pathway is mycotoxin biosynthesis. Non-reducing polyketide synthase; part of the gene cluster that mediates the biosynthesis of the mycotoxin citrinin, a hepato-nephrotoxic compound to humans due to inhibition of respiration complex III. The pathway begins with the synthesis of a keto-aldehyde intermediate by the citrinin PKS (pksCT) from successive condensations of 4 malonyl-CoA units, presumably with a simple acetyl-CoA starter unit. Release of the keto-aldehyde intermediate is consistent with the presence of the C-terminal reductive release domain. Mp11 collaborates with pksCT by catalyzing the hydrolysis of ACP-bound acyl intermediates to free the ACP from stalled intermediates. Mpl2 then catalyzes the oxidation of the C-12 methyl of the ketone intermediate to an alcohol intermediate which is further oxidized by the oxidoreductase mpl7 to produce a bisaldehyde intermediate. The fourth catalytic step is catalyzed by the mpl4 aldehyde dehydrogenase. The final transformation is the reduction of C-3 by mpl6 to provide the chemically stable citrinin nucleus. In Monascus purpureus (Red mold), this protein is Citrinin polyketide synthase.